The primary structure comprises 607 residues: MDMQERYNRRENIRNFSIIAHIDHGKSTLADRILENTKSVETREMQDQLLDSMDLERERGITIKLNAVRLKYEANDGQTYTFHLIDTPGHVDFSYEVSRSLAACEGAILVVDAAQGIEAQTLANVYLALDNDLELLPVVNKIDLPAAEPERVKQELEDVIGLNQDDVVLASAKSNIGIEDILEKIVEVVPPPEGDPSEPLKALIFDSEYDPYRGVISSIRVMEGVVKAGDKIKMMATGKEFEVSEVGINTPKQLPIEELTVGDVGYIIASIKNVDDSRVGDTITHANRPAEAPLKGYKKMNPMVYCGLFPIENKDYNDLREALEKLQLNDASLEFEPESSQALGFGFRTGFLGMLHMEIIQERIEREFGIELIATAPSVIYQCIMKDGSEVTVDNPAQMPERDKIDSIYEPYVKATMMVPNDYVGAVMELCQRKRGQFINMDYLDDIRVNIVYEIPLSEVVFDFFDQLKSNTKGYASFDYEFIENKESNLVKMDILLNGDKVDALSFIVHKDFAYERGKALVEKLKTLIPRQQFEVPVQAAIGQKIVARTNIKSMGKNVLSKCYGGDISRKRKLLEKQKAGKAKMKAVGSVEIPQDAFLAVLKMDDE.

The 183-residue stretch at 11–193 folds into the tr-type G domain; it reads ENIRNFSIIA…KIVEVVPPPE (183 aa). GTP is bound by residues 23–28 and 140–143; these read DHGKST and NKID.

It belongs to the TRAFAC class translation factor GTPase superfamily. Classic translation factor GTPase family. LepA subfamily.

It localises to the cell membrane. The enzyme catalyses GTP + H2O = GDP + phosphate + H(+). Functionally, required for accurate and efficient protein synthesis under certain stress conditions. May act as a fidelity factor of the translation reaction, by catalyzing a one-codon backward translocation of tRNAs on improperly translocated ribosomes. Back-translocation proceeds from a post-translocation (POST) complex to a pre-translocation (PRE) complex, thus giving elongation factor G a second chance to translocate the tRNAs correctly. Binds to ribosomes in a GTP-dependent manner. This Staphylococcus haemolyticus (strain JCSC1435) protein is Elongation factor 4.